A 536-amino-acid polypeptide reads, in one-letter code: MRLRNGTVATALVFITTFLSLSWYTAWQNGKEKLMAYQREFHALKERLRIAEHRTLQRSSELHAILDHFRRMIKEANGSRDALNHFSDETQKLIKDLTNRKALQVPNIYYHMPHLLNHDGSLQPAVQVGLGRTGVSVVMGIPTVKRRVKSYLKETLHSLIDKLSPEEKLDCVIIVFVGETDLEYVNSVVASLQKEFATEISSGLVEVISPPATYYPDLNNLKETFGDSKERVRWRTKQNLDYCFLMMYAQRKGIYYIQLEDDIVAKQNYFSTIKNFALQLSSEDWMILEFSQLGFIGKMFQAPDITLIVEFILMFYKEKPIDWLLDHILWVKVCNPEKDAKHCDRQKSNLRIRFRPSLFQHVGLHSSLAGKIQKLTDKDFLKPLLHKIHVNPPAEVSTSLKVYQGHTLEKTYLGEDFFWAITPVAGDYILFKFDKPVNVERYLFRSGNPEHPGDQLWNTTVEVLPYRKDIVELRSDTKDKRLSDGFFRIGKFEDGLAEGPVNSYLNPISALRLSVLQNSAVWVILNEIHIKRNPAD.

Over 1–6 (MRLRNG) the chain is Cytoplasmic. Residues 7–27 (TVATALVFITTFLSLSWYTAW) traverse the membrane as a helical; Signal-anchor for type II membrane protein segment. Positions 28–54 (QNGKEKLMAYQREFHALKERLRIAEHR) form a coiled coil. Topologically, residues 28–536 (QNGKEKLMAY…EIHIKRNPAD (509 aa)) are lumenal. Asn-77 and Asn-458 each carry an N-linked (GlcNAc...) asparagine glycan.

Belongs to the glycosyltransferase 54 family. A divalent metal cation serves as cofactor. N-glycosylated.

It localises to the golgi apparatus membrane. Its subcellular location is the secreted. It catalyses the reaction N(4)-{beta-D-GlcNAc-(1-&gt;2)-alpha-D-Man-(1-&gt;3)-[beta-D-GlcNAc-(1-&gt;2)-alpha-D-Man-(1-&gt;6)]-beta-D-Man-(1-&gt;4)-beta-D-GlcNAc-(1-&gt;4)-beta-D-GlcNAc}-L-asparaginyl-[protein] + UDP-N-acetyl-alpha-D-glucosamine = N(4)-{beta-D-GlcNAc-(1-&gt;2)-[beta-D-GlcNAc-(1-&gt;4)]-alpha-D-Man-(1-&gt;3)-[beta-D-GlcNAc-(1-&gt;2)-alpha-D-Man-(1-&gt;6)]-beta-D-Man-(1-&gt;4)-beta-D-GlcNAc-(1-&gt;4)-beta-D-GlcNAc}-L-asparaginyl-[protein] + UDP + H(+). The catalysed reaction is an N(4)-{beta-D-GlcNAc-(1-&gt;2)-alpha-D-Man-(1-&gt;3)-[alpha-D-Man-(1-&gt;6)]-beta-D-Man-(1-&gt;4)-beta-D-GlcNAc-(1-&gt;4)-beta-D-GlcNAc}-L-asparaginyl-[protein] + UDP-N-acetyl-alpha-D-glucosamine = an N(4)-{beta-D-GlcNAc-(1-&gt;2)-[beta-D-GlcNAc-(1-&gt;4)]-alpha-D-Man-(1-&gt;3)-[alpha-D-Man-(1-&gt;6)]-beta-D-Man-(1-&gt;4)-beta-D-GlcNAc-(1-&gt;4)-beta-D-GlcNAc}-L-asparaginyl-[protein] + UDP + H(+). It carries out the reaction an N(4)-{beta-D-GlcNAc-(1-&gt;2)-alpha-D-Man-(1-&gt;3)-[beta-D-GlcNAc-(1-&gt;2)-[beta-D-GlcNAc-(1-&gt;6)]-alpha-D-Man-(1-&gt;6)]-beta-D-Man-(1-&gt;4)-beta-D-GlcNAc-(1-&gt;4)-beta-D-GlcNAc}-L-asparaginyl-[protein] + UDP-N-acetyl-alpha-D-glucosamine = an N(4)-{beta-D-GlcNAc-(1-&gt;2)-[beta-D-GlcNAc-(1-&gt;4)]-alpha-D-Man-(1-&gt;3)-[beta-D-GlcNAc-(1-&gt;2)-[beta-D-GlcNAc-(1-&gt;6)]-alpha-D-Man-(1-&gt;6)]-beta-D-Man-(1-&gt;4)-beta-D-GlcNAc-(1-&gt;4)-beta-D-GlcNAc}-L-asparaginyl-[protein] + UDP + H(+). The enzyme catalyses an N(4)-{beta-D-GlcNAc-(1-&gt;2)-alpha-D-Man-(1-&gt;3)-[beta-D-GlcNAc-(1-&gt;2)-alpha-D-Man-(1-&gt;6)]-beta-D-Man-(1-&gt;4)-beta-D-GlcNAc-(1-&gt;4)-[alpha-L-Fuc-(1-&gt;6)]-beta-D-GlcNAc}-L-asparaginyl-[protein] + UDP-N-acetyl-alpha-D-glucosamine = N(4)-{beta-D-GlcNAc-(1-&gt;2)-[beta-D-GlcNAc-(1-&gt;4)]-alpha-D-Man-(1-&gt;3)-[beta-D-GlcNAc-(1-&gt;2)-alpha-D-Man-(1-&gt;6)]-beta-D-Man-(1-&gt;4)-beta-D-GlcNAc-(1-&gt;4)-[alpha-L-Fuc-(1-&gt;6)]-beta-D-GlcNAc}-asparaginyl-[protein] + UDP + H(+). It catalyses the reaction an N(4)-{beta-D-GlcNAc-(1-&gt;2)-alpha-D-Man-(1-&gt;3)-[beta-D-Gal-(1-&gt;4)-beta-D-GlcNAc-(1-&gt;2)-alpha-D-Man-(1-&gt;6)]-beta-D-Man-(1-&gt;4)-beta-D-GlcNAc-(1-&gt;4)-beta-D-GlcNAc}-L-asparaginyl-[protein] + UDP-N-acetyl-alpha-D-glucosamine = an N(4)-{beta-D-GlcNAc-(1-&gt;2)-[beta-D-GlcNAc-(1-&gt;4)]-alpha-D-Man-(1-&gt;3)-[beta-D-Gal-(1-&gt;4)-beta-D-GlcNAc-(1-&gt;2)-alpha-D-Man-(1-&gt;6)]-beta-D-Man-(1-&gt;4)-beta-D-GlcNAc-(1-&gt;4)-beta-D-GlcNAc}-L-asparaginyl-[protein] + UDP + H(+). The catalysed reaction is N(4)-{beta-D-GlcNAc-(1-&gt;2)-alpha-D-Man-(1-&gt;3)-[alpha-D-Man-(1-&gt;3)-{alpha-D-Man-(1-&gt;6)}-alpha-D-Man-(1-&gt;6)]-beta-D-Man-(1-&gt;4)-beta-D-GlcNAc-(1-&gt;4)-beta-D-GlcNAc}-asparaginyl-[protein] + UDP-N-acetyl-alpha-D-glucosamine = N(4)-{beta-D-GlcNAc-(1-&gt;2)-[beta-D-GlcNAc-(1-&gt;4)]-alpha-D-Man-(1-&gt;3)-[alpha-D-Man-(1-&gt;3)-{alpha-D-Man-(1-&gt;6)}-alpha-D-Man-(1-&gt;6)]-beta-D-Man-(1-&gt;4)-beta-D-GlcNAc-(1-&gt;4)-beta-D-GlcNAc}-asparaginyl-[protein] + UDP + H(+). It carries out the reaction N(4)-{beta-D-GlcNAc-(1-&gt;2)-alpha-D-Man-(1-&gt;3)-beta-D-Man-(1-&gt;4)-beta-D-GlcNAc-(1-&gt;4)-beta-D-GlcNAc}-asparaginyl-[protein] + UDP-N-acetyl-alpha-D-glucosamine = N(4)-{beta-D-GlcNAc-(1-&gt;2)-[beta-D-GlcNAc-(1-&gt;4)]-alpha-D-Man-(1-&gt;3)-beta-D-Man-(1-&gt;4)-beta-D-GlcNAc-(1-&gt;4)-beta-D-GlcNAc}-asparaginyl-[protein] + UDP + H(+). It participates in protein modification; protein glycosylation. With respect to regulation, inhibited by UDP. In terms of biological role, glycosyltransferase that catalyze the transfer of GlcNAc from UDP-GlcNAc to the GlcNAcbeta1-2Manalpha1-3 arm of the core structure of N-linked glycans through a beta1-4 linkage and participates in the production of tri- and tetra-antennary N-linked sugar chains. Involved in glucose transport by mediating SLC2A2/GLUT2 glycosylation, thereby controlling cell-surface expression of SLC2A2 in pancreatic beta cells. The polypeptide is Alpha-1,3-mannosyl-glycoprotein 4-beta-N-acetylglucosaminyltransferase A (Xenopus tropicalis (Western clawed frog)).